The chain runs to 188 residues: dCTP deaminase (188 aa).

Residues 111–116 (KSTYAR), 135–137 (TLE), Gln-156, Tyr-170, and Gln-180 contribute to the dCTP site. The active-site Proton donor/acceptor is Glu-137.

This sequence belongs to the dCTP deaminase family. Homotrimer.

It carries out the reaction dCTP + H2O + H(+) = dUTP + NH4(+). It participates in pyrimidine metabolism; dUMP biosynthesis; dUMP from dCTP (dUTP route): step 1/2. In terms of biological role, catalyzes the deamination of dCTP to dUTP. This Pseudomonas putida (strain ATCC 700007 / DSM 6899 / JCM 31910 / BCRC 17059 / LMG 24140 / F1) protein is dCTP deaminase.